The primary structure comprises 238 residues: MSKIPVLEIFGPTIQGEGMVVGQKTMFIRTAGCDYSCAWCDSAFTWDGSAKDQIRQMTPEDIWDELVAIGGENFSHVTISGGNPALLKNIEFLLSILKENGMRTAIETQGSKWQDWLLQIDEITISPKPPSSTMKTDFQRLDAIIQKLAGKDISLKVVVFDDHDFEYAVKMHERYPKVPFFLQVGNDDTKTVDDAMLIKKLLDKYEWLIDKAVNCKEMNDAKVLPQLHALVWGNKRGV.

Residues 14 to 16 (IQG) and arginine 29 contribute to the substrate site. The region spanning 20 to 234 (VVGQKTMFIR…PQLHALVWGN (215 aa)) is the Radical SAM core domain. [4Fe-4S] cluster is bound by residues cysteine 33, cysteine 37, and cysteine 40. Serine 42 is a binding site for Mg(2+). Serine 80 provides a ligand contact to substrate. Residues glycine 82 and 126–128 (SPK) contribute to the S-adenosyl-L-methionine site.

The protein belongs to the radical SAM superfamily. 7-carboxy-7-deazaguanine synthase family. In terms of assembly, homodimer. Requires [4Fe-4S] cluster as cofactor. The cofactor is S-adenosyl-L-methionine. Mg(2+) is required as a cofactor.

It catalyses the reaction 6-carboxy-5,6,7,8-tetrahydropterin + H(+) = 7-carboxy-7-deazaguanine + NH4(+). Its pathway is purine metabolism; 7-cyano-7-deazaguanine biosynthesis. Its function is as follows. Catalyzes the complex heterocyclic radical-mediated conversion of 6-carboxy-5,6,7,8-tetrahydropterin (CPH4) to 7-carboxy-7-deazaguanine (CDG), a step common to the biosynthetic pathways of all 7-deazapurine-containing compounds. The chain is 7-carboxy-7-deazaguanine synthase from Bacillus cereus (strain ATCC 14579 / DSM 31 / CCUG 7414 / JCM 2152 / NBRC 15305 / NCIMB 9373 / NCTC 2599 / NRRL B-3711).